The chain runs to 202 residues: Holliday junction resolvase RecU (202 aa).

Mg(2+)-binding residues include threonine 85, aspartate 87, glutamate 100, and glutamine 119.

This sequence belongs to the RecU family. The cofactor is Mg(2+).

Its subcellular location is the cytoplasm. The enzyme catalyses Endonucleolytic cleavage at a junction such as a reciprocal single-stranded crossover between two homologous DNA duplexes (Holliday junction).. Endonuclease that resolves Holliday junction intermediates in genetic recombination. Cleaves mobile four-strand junctions by introducing symmetrical nicks in paired strands. Promotes annealing of linear ssDNA with homologous dsDNA. Required for DNA repair, homologous recombination and chromosome segregation. This Streptococcus equi subsp. zooepidemicus (strain MGCS10565) protein is Holliday junction resolvase RecU.